A 263-amino-acid polypeptide reads, in one-letter code: 4-hydroxy-tetrahydrodipicolinate reductase (263 aa).

Position 10–15 (10–15 (GASGKM)) interacts with NAD(+). Arg38 provides a ligand contact to NADP(+). NAD(+) contacts are provided by residues 97–99 (GTT) and 123–126 (APNF). Catalysis depends on His153, which acts as the Proton donor/acceptor. His154 is a binding site for (S)-2,3,4,5-tetrahydrodipicolinate. Lys157 (proton donor) is an active-site residue. (S)-2,3,4,5-tetrahydrodipicolinate is bound at residue 163–164 (GT).

It belongs to the DapB family.

The protein resides in the cytoplasm. It catalyses the reaction (S)-2,3,4,5-tetrahydrodipicolinate + NAD(+) + H2O = (2S,4S)-4-hydroxy-2,3,4,5-tetrahydrodipicolinate + NADH + H(+). It carries out the reaction (S)-2,3,4,5-tetrahydrodipicolinate + NADP(+) + H2O = (2S,4S)-4-hydroxy-2,3,4,5-tetrahydrodipicolinate + NADPH + H(+). The protein operates within amino-acid biosynthesis; L-lysine biosynthesis via DAP pathway; (S)-tetrahydrodipicolinate from L-aspartate: step 4/4. Its function is as follows. Catalyzes the conversion of 4-hydroxy-tetrahydrodipicolinate (HTPA) to tetrahydrodipicolinate. The polypeptide is 4-hydroxy-tetrahydrodipicolinate reductase (Dehalococcoides mccartyi (strain ATCC BAA-2266 / KCTC 15142 / 195) (Dehalococcoides ethenogenes (strain 195))).